The sequence spans 72 residues: Translation initiation factor IF-1 2 (72 aa).

The 72-residue stretch at 1-72 (MAKDDVIQMQ…SRARIVFRTK (72 aa)) folds into the S1-like domain.

This sequence belongs to the IF-1 family. Component of the 30S ribosomal translation pre-initiation complex which assembles on the 30S ribosome in the order IF-2 and IF-3, IF-1 and N-formylmethionyl-tRNA(fMet); mRNA recruitment can occur at any time during PIC assembly.

Its subcellular location is the cytoplasm. In terms of biological role, one of the essential components for the initiation of protein synthesis. Stabilizes the binding of IF-2 and IF-3 on the 30S subunit to which N-formylmethionyl-tRNA(fMet) subsequently binds. Helps modulate mRNA selection, yielding the 30S pre-initiation complex (PIC). Upon addition of the 50S ribosomal subunit IF-1, IF-2 and IF-3 are released leaving the mature 70S translation initiation complex. The polypeptide is Translation initiation factor IF-1 2 (Cupriavidus necator (strain ATCC 17699 / DSM 428 / KCTC 22496 / NCIMB 10442 / H16 / Stanier 337) (Ralstonia eutropha)).